A 367-amino-acid polypeptide reads, in one-letter code: UDP-N-acetylglucosamine--N-acetylmuramyl-(pentapeptide) pyrophosphoryl-undecaprenol N-acetylglucosamine transferase (367 aa).

Residues T11–G13, N125, R163, S197, and Q289 contribute to the UDP-N-acetyl-alpha-D-glucosamine site.

Belongs to the glycosyltransferase 28 family. MurG subfamily.

It localises to the cell membrane. It catalyses the reaction di-trans,octa-cis-undecaprenyl diphospho-N-acetyl-alpha-D-muramoyl-L-alanyl-D-glutamyl-meso-2,6-diaminopimeloyl-D-alanyl-D-alanine + UDP-N-acetyl-alpha-D-glucosamine = di-trans,octa-cis-undecaprenyl diphospho-[N-acetyl-alpha-D-glucosaminyl-(1-&gt;4)]-N-acetyl-alpha-D-muramoyl-L-alanyl-D-glutamyl-meso-2,6-diaminopimeloyl-D-alanyl-D-alanine + UDP + H(+). Its pathway is cell wall biogenesis; peptidoglycan biosynthesis. Its function is as follows. Cell wall formation. Catalyzes the transfer of a GlcNAc subunit on undecaprenyl-pyrophosphoryl-MurNAc-pentapeptide (lipid intermediate I) to form undecaprenyl-pyrophosphoryl-MurNAc-(pentapeptide)GlcNAc (lipid intermediate II). The polypeptide is UDP-N-acetylglucosamine--N-acetylmuramyl-(pentapeptide) pyrophosphoryl-undecaprenol N-acetylglucosamine transferase (Clavibacter sepedonicus (Clavibacter michiganensis subsp. sepedonicus)).